Here is a 688-residue protein sequence, read N- to C-terminus: Complement C1s subcomponent (688 aa).

Residues 1–15 (MWCFVFFSLLASFSA) form the signal peptide. Positions 16 to 130 (EPTMYGEILS…TGFAAYYSAV (115 aa)) constitute a CUB 1 domain. Ca(2+) contacts are provided by glutamate 60, aspartate 68, aspartate 113, aspartate 131, valine 132, and glutamate 134. Cysteines 65 and 83 form a disulfide. Positions 131–172 (DVNECTDFTDVPCSHFCNNFIGGYFCSCPPEYFLHDDMRTCG) constitute an EGF-like; calcium-binding domain. Disulfide bonds link cysteine 135-cysteine 147, cysteine 143-cysteine 156, and cysteine 158-cysteine 171. Positions 149, 150, and 153 each coordinate Ca(2+). Asparagine 149 carries the post-translational modification (3R)-3-hydroxyasparagine. A glycan (N-linked (GlcNAc...) asparagine) is linked at asparagine 174. Cysteine 175 and cysteine 202 are oxidised to a cystine. Positions 175 to 290 (CSGDVFTALI…KGWKLRYHGD (116 aa)) constitute a CUB 2 domain. Glutamate 226, aspartate 236, aspartate 275, glycine 278, and glutamine 279 together coordinate Ca(2+). Cysteine 234 and cysteine 251 are oxidised to a cystine. 2 consecutive Sushi domains span residues 292 to 356 (IPCP…ECQP) and 357 to 423 (VDCG…KCIP). 7 disulfides stabilise this stretch: cysteine 294–cysteine 341, cysteine 321–cysteine 354, cysteine 359–cysteine 403, cysteine 386–cysteine 421, cysteine 425–cysteine 549, cysteine 595–cysteine 618, and cysteine 627–cysteine 659. Asparagine 406 carries N-linked (GlcNAc...) asparagine glycosylation. The Peptidase S1 domain occupies 438–680 (IFGGYSTKIQ…YVDWILKTMQ (243 aa)). Active-site charge relay system residues include histidine 475 and aspartate 529. The Charge relay system role is filled by serine 631.

It belongs to the peptidase S1 family. In terms of assembly, core component of the complement C1 complex, a calcium-dependent complex composed of 1 molecule of the C1Q subcomplex, 2 molecules of C1R and 2 molecules of C1S. The C1Q subcomplex is composed 18 subunits: 3 chains of C1QA, C1QB, and C1QC trimerize to form 6 collagen-like triple helices connected to six globular ligand-recognition modules. Cleaved and activated by C1R to generate Complement C1s subcomponent heavy and light chains. Post-translationally, the iron and 2-oxoglutarate dependent 3-hydroxylation of aspartate and asparagine is (R) stereospecific within EGF domains.

The protein resides in the secreted. It is found in the cell surface. It catalyses the reaction Cleavage of Arg-|-Ala bond in complement component C4 to form C4a and C4b, and Lys(or Arg)-|-Lys bond in complement component C2 to form C2a and C2b: the 'classical' pathway C3 convertase.. Cleaved and activated by C1R. Immunoglobulin-binding promotes autoactivation of C1R, which results in the cleavage of the Arg-Ile bond in the catalytic domain. Inhibited by C1 inhibitor (SERPING1). Component of the complement C1 complex, a multiprotein complex that initiates the classical pathway of the complement system, a cascade of proteins that leads to phagocytosis and breakdown of pathogens and signaling that strengthens the adaptive immune system. C1S is activated following association of the C1 complex with immunoglobulins (IgG or IgM) complexed with antigens to form antigen-antibody complexes on the surface of pathogens. C1S is cleaved and activated by C1R to generate C1s subcomponent heavy and light chains. C1s subcomponent light chain then cleaves and activates C2 and C4, the next components of the classical complement pathway. Functionally, serine protease component of the complement C1 complex, which catalyzes cleavage and activation of C2 and C4, the next components of the classical complement pathway. Also cleaves IGFBP5 and thereby inhibits the trophic effects of IGF1. The protein is Complement C1s subcomponent of Rattus norvegicus (Rat).